Here is a 356-residue protein sequence, read N- to C-terminus: Phospho-N-acetylmuramoyl-pentapeptide-transferase (356 aa).

10 helical membrane passes run 25–45 (TIAA…SIIA), 70–90 (GTPT…AFLW), 93–113 (LSNI…AIGF), 138–158 (FFVA…GFAL), 164–184 (YLIH…VATG), 195–215 (GLAI…AYLC), 235–255 (LAVL…FNAP), 258–278 (AIFM…TVAV), 284–304 (IVLV…VIQV), and 333–353 (QVVI…LSTL).

It belongs to the glycosyltransferase 4 family. MraY subfamily. It depends on Mg(2+) as a cofactor.

Its subcellular location is the cell inner membrane. The catalysed reaction is UDP-N-acetyl-alpha-D-muramoyl-L-alanyl-gamma-D-glutamyl-meso-2,6-diaminopimeloyl-D-alanyl-D-alanine + di-trans,octa-cis-undecaprenyl phosphate = di-trans,octa-cis-undecaprenyl diphospho-N-acetyl-alpha-D-muramoyl-L-alanyl-D-glutamyl-meso-2,6-diaminopimeloyl-D-alanyl-D-alanine + UMP. The protein operates within cell wall biogenesis; peptidoglycan biosynthesis. Catalyzes the initial step of the lipid cycle reactions in the biosynthesis of the cell wall peptidoglycan: transfers peptidoglycan precursor phospho-MurNAc-pentapeptide from UDP-MurNAc-pentapeptide onto the lipid carrier undecaprenyl phosphate, yielding undecaprenyl-pyrophosphoryl-MurNAc-pentapeptide, known as lipid I. The polypeptide is Phospho-N-acetylmuramoyl-pentapeptide-transferase (Bartonella tribocorum (strain CIP 105476 / IBS 506)).